We begin with the raw amino-acid sequence, 164 residues long: UPF0303 protein RHECIAT_CH0003058 (164 aa).

The protein belongs to the UPF0303 family.

The chain is UPF0303 protein RHECIAT_CH0003058 from Rhizobium etli (strain CIAT 652).